Reading from the N-terminus, the 305-residue chain is MKKFLKVWSVLTIICMTVVVFGGALVTKTGSADGCGNSWPLCNGQLVRLTDVTPEKLIEFMHRMTTGISSIFVIVLAICAWIYMKNRRETKPLAIIAVLFLIIQALMGMAAVVWGQNPYIMALHFGISIICYASIVLLALMIFEVDRKFDARNLVMGTKLRVNIYALTIYTYLAVYTGALVRHEKASMAVPVWPFENGHFIMPTSVQDYVQYFHRLAAFILIVWLLYVTWLVFRDYRRYRVLTFSMVLSLVFIALQAVTGALSVYTGVNLYIALAHSLIITMLFALLCYLCLLASRSKSNRLRIK.

Residues 1–6 (MKKFLK) are Cytoplasmic-facing. The chain crosses the membrane as a helical span at residues 7-27 (VWSVLTIICMTVVVFGGALVT). Over 28–63 (KTGSADGCGNSWPLCNGQLVRLTDVTPEKLIEFMHR) the chain is Extracellular. Cys-35 and Cys-42 are joined by a disulfide. Residue Glu-59 is part of the active site. His-62 is a heme o binding site. Residues 64–84 (MTTGISSIFVIVLAICAWIYM) traverse the membrane as a helical segment. At 85 to 92 (KNRRETKP) the chain is on the cytoplasmic side. A helical transmembrane segment spans residues 93–113 (LAIIAVLFLIIQALMGMAAVV). Topologically, residues 114–122 (WGQNPYIMA) are extracellular. A helical transmembrane segment spans residues 123 to 143 (LHFGISIICYASIVLLALMIF). His-124 lines the heme o pocket. At 144 to 160 (EVDRKFDARNLVMGTKL) the chain is on the cytoplasmic side. Residues 161-181 (RVNIYALTIYTYLAVYTGALV) traverse the membrane as a helical segment. At 182–212 (RHEKASMAVPVWPFENGHFIMPTSVQDYVQY) the chain is on the extracellular side. Residues 213–233 (FHRLAAFILIVWLLYVTWLVF) form a helical membrane-spanning segment. Position 214 (His-214) interacts with heme b. The Cytoplasmic segment spans residues 234-240 (RDYRRYR). Residues 241-261 (VLTFSMVLSLVFIALQAVTGA) form a helical membrane-spanning segment. The Extracellular portion of the chain corresponds to 262–271 (LSVYTGVNLY). Residues 272-292 (IALAHSLIITMLFALLCYLCL) traverse the membrane as a helical segment. Position 276 (His-276) interacts with heme b. Residues 293-305 (LASRSKSNRLRIK) lie on the Cytoplasmic side of the membrane.

This sequence belongs to the COX15/CtaA family. Type 1 subfamily. As to quaternary structure, interacts with CtaB. It depends on heme b as a cofactor.

Its subcellular location is the cell membrane. The catalysed reaction is Fe(II)-heme o + 2 A + H2O = Fe(II)-heme a + 2 AH2. The protein operates within porphyrin-containing compound metabolism; heme A biosynthesis; heme A from heme O: step 1/1. Its function is as follows. Catalyzes the conversion of heme O to heme A by two successive hydroxylations of the methyl group at C8. The first hydroxylation forms heme I, the second hydroxylation results in an unstable dihydroxymethyl group, which spontaneously dehydrates, resulting in the formyl group of heme A. This Listeria monocytogenes serovar 1/2a (strain ATCC BAA-679 / EGD-e) protein is Heme A synthase.